The following is a 318-amino-acid chain: Ribokinase (318 aa).

Substrate is bound by residues 11–13 (NTD), 41–45 (GKGAN), and Glu-146. ATP-binding positions include Asn-190 and 229–234 (TLGSQG). K(+) contacts are provided by Asp-256 and Thr-258. An ATP-binding site is contributed by 261-262 (GD). Asp-262 is a binding site for substrate. The active-site Proton acceptor is the Asp-262. 4 residues coordinate K(+): Thr-292, Arg-295, Gly-297, and Ser-301.

The protein belongs to the carbohydrate kinase PfkB family. Ribokinase subfamily. As to quaternary structure, homodimer. Requires Mg(2+) as cofactor.

It is found in the cytoplasm. The protein localises to the nucleus. The enzyme catalyses D-ribose + ATP = D-ribose 5-phosphate + ADP + H(+). Its pathway is carbohydrate metabolism; D-ribose degradation; D-ribose 5-phosphate from beta-D-ribopyranose: step 2/2. With respect to regulation, activated by a monovalent cation that binds near, but not in, the active site. The most likely occupant of the site in vivo is potassium. Ion binding induces a conformational change that may alter substrate affinity. Catalyzes the phosphorylation of ribose at O-5 in a reaction requiring ATP and magnesium. The resulting D-ribose-5-phosphate can then be used either for sythesis of nucleotides, histidine, and tryptophan, or as a component of the pentose phosphate pathway. This chain is Ribokinase, found in Schizosaccharomyces pombe (strain 972 / ATCC 24843) (Fission yeast).